The primary structure comprises 508 residues: Histidine ammonia-lyase (508 aa).

The segment at residues 143-145 (ASG) is a cross-link (5-imidazolinone (Ala-Gly)). At Ser144 the chain carries 2,3-didehydroalanine (Ser).

Belongs to the PAL/histidase family. In terms of processing, contains an active site 4-methylidene-imidazol-5-one (MIO), which is formed autocatalytically by cyclization and dehydration of residues Ala-Ser-Gly.

The protein resides in the cytoplasm. The catalysed reaction is L-histidine = trans-urocanate + NH4(+). Its pathway is amino-acid degradation; L-histidine degradation into L-glutamate; N-formimidoyl-L-glutamate from L-histidine: step 1/3. This Caldanaerobacter subterraneus subsp. tengcongensis (strain DSM 15242 / JCM 11007 / NBRC 100824 / MB4) (Thermoanaerobacter tengcongensis) protein is Histidine ammonia-lyase.